The sequence spans 61 residues: Phosphoenolpyruvate synthase (61 aa).

This sequence belongs to the PEP-utilizing enzyme family. It depends on Mg(2+) as a cofactor.

The enzyme catalyses pyruvate + ATP + H2O = phosphoenolpyruvate + AMP + phosphate + 2 H(+). The protein operates within carbohydrate biosynthesis; gluconeogenesis. Its function is as follows. Catalyzes the phosphorylation of pyruvate to phosphoenolpyruvate. The protein is Phosphoenolpyruvate synthase (ppsA) of Enterobacter agglomerans (Erwinia herbicola).